We begin with the raw amino-acid sequence, 147 residues long: Hemoglobin subunit epsilon (147 aa).

One can recognise a Globin domain in the interval 3–147; that stretch reads HFTAEEKAAV…VAIALAHKYH (145 aa). Phosphoserine occurs at positions 14 and 51. His64 and His93 together coordinate heme b.

This sequence belongs to the globin family. Heterotetramer of two alpha chains and two epsilon chains in early embryonic hemoglobin Gower-2; two zeta chains and two epsilon chains in early embryonic hemoglobin Gower-1. Red blood cells.

Functionally, the epsilon chain is a beta-type chain of early mammalian embryonic hemoglobin. This is Hemoglobin subunit epsilon (HBE1) from Symphalangus syndactylus (Siamang).